The following is a 171-amino-acid chain: Bursicon (171 aa).

The N-terminal stretch at 1–31 is a signal peptide; the sequence is MISSPSTPATFAAGSLVLLCLVLGGGHFALA. 5 disulfide bridges follow: Cys-47-Cys-96, Cys-61-Cys-110, Cys-71-Cys-131, Cys-75-Cys-133, and Cys-93-Cys-136. The 91-residue stretch at 47–137 folds into the CTCK domain; that stretch reads CQVTPVIHVL…PLECMCRPCT (91 aa).

In terms of assembly, heterodimer of burs and pburs.

The protein resides in the secreted. In terms of biological role, final heterodimeric neurohormone released at the end of the molting cycle, involved in the sclerotization (tanning) of the insect cuticle, melanization and wing spreading. The sequence is that of Bursicon from Culex pipiens pipiens (Northern house mosquito).